The following is a 315-amino-acid chain: Transcription antitermination protein NusB (315 aa).

Residues 296 to 315 are disordered; that stretch reads SANFDTKSAELNDADEKSQD. The span at 302–315 shows a compositional bias: basic and acidic residues; it reads KSAELNDADEKSQD.

The protein belongs to the NusB family.

Involved in transcription antitermination. Required for transcription of ribosomal RNA (rRNA) genes. Binds specifically to the boxA antiterminator sequence of the ribosomal RNA (rrn) operons. This is Transcription antitermination protein NusB from Psychrobacter cryohalolentis (strain ATCC BAA-1226 / DSM 17306 / VKM B-2378 / K5).